The sequence spans 159 residues: Fatty acid-binding protein homolog 1 (159 aa).

The signal sequence occupies residues 1–17 (MCAKIALLLVLVGAASA).

Belongs to the calycin superfamily. Fatty-acid binding protein (FABP) family. In terms of tissue distribution, first detected in hypodermal precursor cells at the time of gastrulation. From the two-fold stage through to three-fold stages, expression is localized exclusively to hyp-7 but disappears in newly hatched L1s and subsequent developmental stages. Expression from L1 to adult stages is found in a single neuron in the ventral cord with a process into the nerve ring.

It localises to the secreted. Its function is as follows. May play a role in sequestering potentially toxic fatty acids and their peroxidation products, or it may be involved in the maintenance of the impermeable lipid layer of the eggshell. The polypeptide is Fatty acid-binding protein homolog 1 (lbp-1) (Caenorhabditis elegans).